The following is a 278-amino-acid chain: Phage-like element PBSX protein XkdB (278 aa).

Residues 58 to 80 constitute a DNA-binding region (H-T-H motif); that stretch reads LKAREMAAVFGVSEKTVRRWLEL. 2 disordered regions span residues 117–136 and 239–278; these read SLKE…RTDI and QHER…RKQV. A compositionally biased stretch (basic and acidic residues) spans 248-263; the sequence is KTNNRTDFGRAEKRET.

To B.subtilis YqaL.

This chain is Phage-like element PBSX protein XkdB (xkdB), found in Bacillus subtilis (strain 168).